A 556-amino-acid chain; its full sequence is Formate--tetrahydrofolate ligase (556 aa).

Position 65–72 (65–72 (TPAGEGKS)) interacts with ATP.

The protein belongs to the formate--tetrahydrofolate ligase family.

The enzyme catalyses (6S)-5,6,7,8-tetrahydrofolate + formate + ATP = (6R)-10-formyltetrahydrofolate + ADP + phosphate. The protein operates within one-carbon metabolism; tetrahydrofolate interconversion. The polypeptide is Formate--tetrahydrofolate ligase (Streptococcus thermophilus (strain CNRZ 1066)).